A 273-amino-acid chain; its full sequence is Putative ABC transporter ATP-binding protein DVU_1056 (273 aa).

The ABC transporter domain maps to 10 to 242; that stretch reads LSLDDIHFTY…IHHGGEVAHE (233 aa). 44–51 provides a ligand contact to ATP; sequence GHNGSGKT. The tract at residues 234–273 is disordered; it reads HHGGEVAHEHPSRGCCHQHDGSHHHAGHDDDHPHTSQTTE. Over residues 235 to 267 the composition is skewed to basic and acidic residues; it reads HGGEVAHEHPSRGCCHQHDGSHHHAGHDDDHPH.

This sequence belongs to the ABC transporter superfamily.

The protein localises to the cell inner membrane. Functionally, probably part of an ABC transporter complex. Responsible for energy coupling to the transport system. This Nitratidesulfovibrio vulgaris (strain ATCC 29579 / DSM 644 / CCUG 34227 / NCIMB 8303 / VKM B-1760 / Hildenborough) (Desulfovibrio vulgaris) protein is Putative ABC transporter ATP-binding protein DVU_1056.